The chain runs to 460 residues: Cysteine--tRNA ligase (460 aa).

Zn(2+) is bound at residue Cys-28. Positions 30–40 match the 'HIGH' region motif; it reads MTVYDYCHLGH. Zn(2+) contacts are provided by Cys-209, His-234, and Glu-238. The short motif at 266-270 is the 'KMSKS' region element; it reads KMSKS. Lys-269 contacts ATP.

It belongs to the class-I aminoacyl-tRNA synthetase family. Monomer. Requires Zn(2+) as cofactor.

It localises to the cytoplasm. It carries out the reaction tRNA(Cys) + L-cysteine + ATP = L-cysteinyl-tRNA(Cys) + AMP + diphosphate. In Pseudomonas putida (strain ATCC 700007 / DSM 6899 / JCM 31910 / BCRC 17059 / LMG 24140 / F1), this protein is Cysteine--tRNA ligase.